A 284-amino-acid polypeptide reads, in one-letter code: Tropomyosin (284 aa).

The disordered stretch occupies residues 1-39 (MDAIKKKMQAMKLEKDNAMDRADTLEQQNKEANIRAEKT). A coiled-coil region spans residues 1–284 (MDAIKKKMQA…DQTFSELSGY (284 aa)). Residues 12 to 39 (KLEKDNAMDRADTLEQQNKEANIRAEKT) are compositionally biased toward basic and acidic residues.

The protein belongs to the tropomyosin family. In terms of assembly, homodimer.

Functionally, tropomyosin, in association with the troponin complex, plays a central role in the calcium dependent regulation of muscle contraction. This Homarus americanus (American lobster) protein is Tropomyosin (TM1).